The primary structure comprises 4083 residues: Dynein heavy chain, cytoplasmic (4083 aa).

The segment at 1–1745 (MTDDQVAQAL…TIEQSCVSFC (1745 aa)) is stem. 3 coiled-coil regions span residues 127-166 (DAVV…FIEV), 381-402 (INQW…MRKR), and 801-821 (KLDL…VDQA). AAA regions lie at residues 1746 to 1967 (YGFE…VLRN), 2026 to 2265 (SYLA…YKAD), 2373 to 2622 (SLES…WVRG), and 2716 to 2980 (TFAE…GNSQ). Residues 1784–1791 (GPAGTGKT), 2064–2071 (GDAGTGKT), 2412–2419 (GPPGSGKT), and 2754–2761 (GPNYSGKT) contribute to the ATP site. Positions 2987–3294 (LTSLRRFQSL…RSIKLMESLT (308 aa)) are stalk. 3 coiled-coil regions span residues 3015–3085 (LEKL…NERR), 3223–3302 (LKEE…RWIK), and 3527–3607 (LEKE…VEDL). AAA stretches follow at residues 3364–3592 (MVNP…EIAK) and 3748–3952 (LKSL…FLDH).

This sequence belongs to the dynein heavy chain family. Consists of at least two heavy chains and a number of intermediate and light chains.

The protein resides in the cytoplasm. Its subcellular location is the cytoskeleton. Its function is as follows. Cytoplasmic dynein acts as a motor for the intracellular retrograde motility of vesicles and organelles along microtubules. Dynein has ATPase activity; the force-producing power stroke is thought to occur on release of ADP. Required to maintain uniform nuclear distribution in hyphae. May play an important role in the proper orientation of the mitotic spindle into the budding daughter cell yeast. Probably required for normal progression of the cell cycle. This is Dynein heavy chain, cytoplasmic (DYN1) from Eremothecium gossypii (strain ATCC 10895 / CBS 109.51 / FGSC 9923 / NRRL Y-1056) (Yeast).